The primary structure comprises 90 residues: Cell division topological specificity factor 2 (90 aa).

This sequence belongs to the MinE family.

In terms of biological role, prevents the cell division inhibition by proteins MinC and MinD at internal division sites while permitting inhibition at polar sites. This ensures cell division at the proper site by restricting the formation of a division septum at the midpoint of the long axis of the cell. The sequence is that of Cell division topological specificity factor 2 from Syntrophomonas wolfei subsp. wolfei (strain DSM 2245B / Goettingen).